The sequence spans 292 residues: Acetylglutamate kinase (292 aa).

Substrate contacts are provided by residues 64-65, arginine 86, and asparagine 190; that span reads GG.

Belongs to the acetylglutamate kinase family. ArgB subfamily.

It localises to the cytoplasm. It catalyses the reaction N-acetyl-L-glutamate + ATP = N-acetyl-L-glutamyl 5-phosphate + ADP. It functions in the pathway amino-acid biosynthesis; L-arginine biosynthesis; N(2)-acetyl-L-ornithine from L-glutamate: step 2/4. Functionally, catalyzes the ATP-dependent phosphorylation of N-acetyl-L-glutamate. This chain is Acetylglutamate kinase, found in Citrifermentans bemidjiense (strain ATCC BAA-1014 / DSM 16622 / JCM 12645 / Bem) (Geobacter bemidjiensis).